The following is a 485-amino-acid chain: Vacuolar fusion protein CCZ1 homolog (485 aa).

It belongs to the CCZ1 family. Component of the Mon1-Ccz1 guanyl-nucleotide exchange factor complex made up of Mon1, Ccz1 and Bulli; the interaction of Bulli with the Mon1-Ccz1 heterodimer is mediated via the C-terminal Mic1 domain of Bulli. Mon1 and Ccz1 form a stable complex which displays Rab7 GEF activity with or without Bulli; GEF activity is enhanced by Bulli possibly by improving membrane association of the complex. Interacts with Rab5 and Rab7; preferentially binds GTP-bound Rab5 and GDP-bound Rab7.

It is found in the cytoplasm. It localises to the cytosol. Its activity is regulated as follows. The Rab7 guanyl-nucleotide exchange factor (GEF) activity of the Mon1-Ccz1 complex is autoinhibited by the N-terminal disordered region of Mon1. GEF activity is stimulated by Rab5-mediated recruitment to membranes. Functionally, part of the Mon1-Ccz1 guanyl-nucleotide exchange factor complex specific for Rab7 that promotes the exchange of GDP to GTP, converting Rab7 from an inactive GDP-bound form into an active GTP-bound form. Required for recruitment of Rab7 to endosomal and autophagosomal membranes to mediate endolysosomal and autolysosomal vesicle maturation. Required for fusion of multivesicular bodies and lysosomes but not their formation or trafficking. Involved in the replacement of Rab5 (and possibly Rab4) with Rab7, also known as Rab conversion or the Rab cascade, during endosomal maturation. The Mon1-Ccz1 complex is recruited to phosphatidylinositol 3-phosphate (PtdIns[3]P) enriched membranes by Rab5, which stimulates recruitment and guanyl-nucleotide exchange of Rab7. Together with Rab7 required for autolysosome formation in fat cells and autophagic degradation during starvation-induced basal and developmental autophagy. The sequence is that of Vacuolar fusion protein CCZ1 homolog from Drosophila melanogaster (Fruit fly).